A 397-amino-acid polypeptide reads, in one-letter code: Elongation factor Tu (397 aa).

The region spanning 10 to 207 (LPHVNVGTIG…TLDSYIPEPV (198 aa)) is the tr-type G domain. The interval 19–26 (GHVDHGKT) is G1. Residue 19-26 (GHVDHGKT) coordinates GTP. Residue T26 participates in Mg(2+) binding. A G2 region spans residues 60–64 (GITIN). Residues 81-84 (DCPG) form a G3 region. Residues 81–85 (DCPGH) and 136–139 (NKAD) contribute to the GTP site. The segment at 136-139 (NKAD) is G4. The G5 stretch occupies residues 174-176 (SAR).

The protein belongs to the TRAFAC class translation factor GTPase superfamily. Classic translation factor GTPase family. EF-Tu/EF-1A subfamily. In terms of assembly, monomer.

It is found in the cytoplasm. The catalysed reaction is GTP + H2O = GDP + phosphate + H(+). In terms of biological role, GTP hydrolase that promotes the GTP-dependent binding of aminoacyl-tRNA to the A-site of ribosomes during protein biosynthesis. This Pseudomonas syringae pv. syringae (strain B728a) protein is Elongation factor Tu.